Here is a 198-residue protein sequence, read N- to C-terminus: Endonuclease V (198 aa).

Mg(2+) is bound by residues D38 and D101.

Belongs to the endonuclease V family. Mg(2+) is required as a cofactor.

It localises to the cytoplasm. The enzyme catalyses Endonucleolytic cleavage at apurinic or apyrimidinic sites to products with a 5'-phosphate.. Functionally, DNA repair enzyme involved in the repair of deaminated bases. Selectively cleaves double-stranded DNA at the second phosphodiester bond 3' to a deoxyinosine leaving behind the intact lesion on the nicked DNA. This Saccharolobus islandicus (strain M.14.25 / Kamchatka #1) (Sulfolobus islandicus) protein is Endonuclease V.